Consider the following 1230-residue polypeptide: ATP-dependent helicase/nuclease subunit A (1230 aa).

Residues 9-480 form the UvrD-like helicase ATP-binding domain; the sequence is STWTDDQWKA…IDLNKNFRSR (472 aa). 30–37 lines the ATP pocket; that stretch reads AAAGSGKT. Residues 507 to 796 enclose the UvrD-like helicase C-terminal domain; the sequence is QAELKLGASY…RLMTIHSSKG (290 aa).

Belongs to the helicase family. AddA subfamily. In terms of assembly, heterodimer of AddA and AddB/RexB. Mg(2+) is required as a cofactor.

The enzyme catalyses Couples ATP hydrolysis with the unwinding of duplex DNA by translocating in the 3'-5' direction.. The catalysed reaction is ATP + H2O = ADP + phosphate + H(+). In terms of biological role, the heterodimer acts as both an ATP-dependent DNA helicase and an ATP-dependent, dual-direction single-stranded exonuclease. Recognizes the chi site generating a DNA molecule suitable for the initiation of homologous recombination. The AddA nuclease domain is required for chi fragment generation; this subunit has the helicase and 3' -&gt; 5' nuclease activities. The polypeptide is ATP-dependent helicase/nuclease subunit A (Bacillus licheniformis (strain ATCC 14580 / DSM 13 / JCM 2505 / CCUG 7422 / NBRC 12200 / NCIMB 9375 / NCTC 10341 / NRRL NRS-1264 / Gibson 46)).